The following is a 558-amino-acid chain: Dihydroxy-acid dehydratase (558 aa).

C51 serves as a coordination point for [2Fe-2S] cluster. D83 provides a ligand contact to Mg(2+). C124 lines the [2Fe-2S] cluster pocket. Mg(2+) contacts are provided by D125 and K126. K126 carries the N6-carboxylysine modification. Residue C196 participates in [2Fe-2S] cluster binding. E447 serves as a coordination point for Mg(2+). The Proton acceptor role is filled by S473.

The protein belongs to the IlvD/Edd family. In terms of assembly, homodimer. It depends on [2Fe-2S] cluster as a cofactor. Mg(2+) is required as a cofactor.

The catalysed reaction is (2R)-2,3-dihydroxy-3-methylbutanoate = 3-methyl-2-oxobutanoate + H2O. It catalyses the reaction (2R,3R)-2,3-dihydroxy-3-methylpentanoate = (S)-3-methyl-2-oxopentanoate + H2O. Its pathway is amino-acid biosynthesis; L-isoleucine biosynthesis; L-isoleucine from 2-oxobutanoate: step 3/4. It participates in amino-acid biosynthesis; L-valine biosynthesis; L-valine from pyruvate: step 3/4. Functions in the biosynthesis of branched-chain amino acids. Catalyzes the dehydration of (2R,3R)-2,3-dihydroxy-3-methylpentanoate (2,3-dihydroxy-3-methylvalerate) into 2-oxo-3-methylpentanoate (2-oxo-3-methylvalerate) and of (2R)-2,3-dihydroxy-3-methylbutanoate (2,3-dihydroxyisovalerate) into 2-oxo-3-methylbutanoate (2-oxoisovalerate), the penultimate precursor to L-isoleucine and L-valine, respectively. This chain is Dihydroxy-acid dehydratase, found in Flavobacterium psychrophilum (strain ATCC 49511 / DSM 21280 / CIP 103535 / JIP02/86).